The chain runs to 157 residues: Glutaredoxin-2, mitochondrial (157 aa).

The N-terminal 19 residues, 1 to 19 (MSWYRAASVGRRLVASGRI), are a transit peptide targeting the mitochondrion. The Glutaredoxin domain maps to 50 to 150 (VNQIQETISN…PLVHQCYLNK (101 aa)). C61 contributes to the [2Fe-2S] cluster binding site. K67 lines the glutathione pocket. Position 70 is an S-glutathionyl cysteine; alternate (C70). An intrachain disulfide couples C70 to C73. 2 residues coordinate glutathione: Q102 and V114. C146 contacts [2Fe-2S] cluster.

The protein belongs to the glutaredoxin family. As to quaternary structure, monomer; active form. Homodimer; inactive form. The homodimer is probably linked by 1 2Fe-2S cluster.

The protein resides in the mitochondrion. It localises to the nucleus. Its activity is regulated as follows. The 2Fe-2S present in the homodimer leads to inactivation of the enzyme. The 2Fe-2S may serve as a redox sensor: the presence of one-electron oxidants or reductants leading to the loss of the 2Fe-2S cluster, subsequent monomerization and activation of the enzyme. Its function is as follows. Glutathione-dependent oxidoreductase that facilitates the maintenance of mitochondrial redox homeostasis upon induction of apoptosis by oxidative stress. Involved in response to hydrogen peroxide and regulation of apoptosis caused by oxidative stress. Acts as a very efficient catalyst of monothiol reactions because of its high affinity for protein glutathione-mixed disulfides. Can receive electrons not only from glutathione (GSH), but also from thioredoxin reductase supporting both monothiol and dithiol reactions. Efficiently catalyzes both glutathionylation and deglutathionylation of mitochondrial complex I, which in turn regulates the superoxide production by the complex. Overexpression decreases the susceptibility to apoptosis and prevents loss of cardiolipin and cytochrome c release. In Rattus norvegicus (Rat), this protein is Glutaredoxin-2, mitochondrial (Glrx2).